Reading from the N-terminus, the 397-residue chain is Succinate--CoA ligase [ADP-forming] subunit beta (397 aa).

The ATP-grasp domain occupies 9 to 244 (KEIMKQYGIS…LTEEDPREVQ (236 aa)). Residues K46, 53-55 (GRG), E99, L102, and E107 each bind ATP. Mg(2+)-binding residues include N199 and D213. Residues N264 and 321 to 323 (GIM) each bind substrate.

The protein belongs to the succinate/malate CoA ligase beta subunit family. In terms of assembly, heterotetramer of two alpha and two beta subunits. Requires Mg(2+) as cofactor.

The enzyme catalyses succinate + ATP + CoA = succinyl-CoA + ADP + phosphate. The catalysed reaction is GTP + succinate + CoA = succinyl-CoA + GDP + phosphate. Its pathway is carbohydrate metabolism; tricarboxylic acid cycle; succinate from succinyl-CoA (ligase route): step 1/1. Functionally, succinyl-CoA synthetase functions in the citric acid cycle (TCA), coupling the hydrolysis of succinyl-CoA to the synthesis of either ATP or GTP and thus represents the only step of substrate-level phosphorylation in the TCA. The beta subunit provides nucleotide specificity of the enzyme and binds the substrate succinate, while the binding sites for coenzyme A and phosphate are found in the alpha subunit. The chain is Succinate--CoA ligase [ADP-forming] subunit beta from Alkaliphilus metalliredigens (strain QYMF).